The sequence spans 703 residues: Pentatricopeptide repeat-containing protein At1g22830 (703 aa).

PPR repeat units follow at residues 82–116, 117–147, 148–182, 183–217, 218–248, 249–283, 284–318, 319–353, 356–386, 387–421, 422–452, 458–488, 489–523, 524–554, and 560–594; these read VLYSSASLLSTCVGFNEFVPGQQLHAHCISSGLEF, DSVLVPKLVTFYSAFNLLDEAQTITENSEIL, HPLPWNVLIGSYIRNKRFQESVSVYKRMMSKGIRA, DEFTYPSVIKACAALLDFAYGRVVHGSIEVSSHRC, NLYVCNALISMYKRFGKVDVARRLFDRMSER, DAVSWNAIINCYTSEEKLGEAFKLLDRMYLSGVEA, SIVTWNTIAGGCLEAGNYIGALNCVVGMRNCNVRI, GSVAMINGLKACSHIGALKWGKVFHCLVIRSCSFS, IDNVRNSLITMYSRCSDLRHAFIVFQQVEAN, SLSTWNSIISGFAYNERSEETSFLLKEMLLSGFHP, NHITLASILPLFARVGNLQHGKEFHCYILRR, CLILWNSLVDMYAKSGEIIAAKRVFDSMRKR, DKVTYTSLIDGYGRLGKGEVALAWFKDMDRSGIKP, DHVTMVAVLSACSHSNLVREGHWLFTKMEHV, and RLEHYSCMVDLYCRAGYLDKARDIFHTIPYEPSSA. The segment at 595–671 is type E motif; the sequence is MCATLLKACL…AHEFALMETD (77 aa). Positions 671–703 are disordered; the sequence is DSELDGENNKPMNDDSVINQEQSSDEERLVEVG.

It belongs to the PPR family. PCMP-E subfamily.

The protein is Pentatricopeptide repeat-containing protein At1g22830 (PCMP-E24) of Arabidopsis thaliana (Mouse-ear cress).